The chain runs to 77 residues: Exodeoxyribonuclease 7 small subunit (77 aa).

It belongs to the XseB family. As to quaternary structure, heterooligomer composed of large and small subunits.

Its subcellular location is the cytoplasm. It catalyses the reaction Exonucleolytic cleavage in either 5'- to 3'- or 3'- to 5'-direction to yield nucleoside 5'-phosphates.. In terms of biological role, bidirectionally degrades single-stranded DNA into large acid-insoluble oligonucleotides, which are then degraded further into small acid-soluble oligonucleotides. This chain is Exodeoxyribonuclease 7 small subunit, found in Alkaliphilus oremlandii (strain OhILAs) (Clostridium oremlandii (strain OhILAs)).